The following is a 311-amino-acid chain: Aspartate carbamoyltransferase catalytic subunit (311 aa).

Carbamoyl phosphate-binding residues include Arg55 and Thr56. Lys83 serves as a coordination point for L-aspartate. Carbamoyl phosphate-binding residues include Arg105, His134, and Gln137. 2 residues coordinate L-aspartate: Arg167 and Arg226. Residues Gly267 and Pro268 each coordinate carbamoyl phosphate.

Belongs to the aspartate/ornithine carbamoyltransferase superfamily. ATCase family. In terms of assembly, heterododecamer (2C3:3R2) of six catalytic PyrB chains organized as two trimers (C3), and six regulatory PyrI chains organized as three dimers (R2).

The enzyme catalyses carbamoyl phosphate + L-aspartate = N-carbamoyl-L-aspartate + phosphate + H(+). The protein operates within pyrimidine metabolism; UMP biosynthesis via de novo pathway; (S)-dihydroorotate from bicarbonate: step 2/3. Functionally, catalyzes the condensation of carbamoyl phosphate and aspartate to form carbamoyl aspartate and inorganic phosphate, the committed step in the de novo pyrimidine nucleotide biosynthesis pathway. This Corynebacterium jeikeium (strain K411) protein is Aspartate carbamoyltransferase catalytic subunit.